We begin with the raw amino-acid sequence, 493 residues long: Probable cytosol aminopeptidase (493 aa).

Positions 257 and 262 each coordinate Mn(2+). The active site involves Lys269. 3 residues coordinate Mn(2+): Asp281, Asp341, and Glu343. Arg345 is a catalytic residue.

The protein belongs to the peptidase M17 family. The cofactor is Mn(2+).

It is found in the cytoplasm. The catalysed reaction is Release of an N-terminal amino acid, Xaa-|-Yaa-, in which Xaa is preferably Leu, but may be other amino acids including Pro although not Arg or Lys, and Yaa may be Pro. Amino acid amides and methyl esters are also readily hydrolyzed, but rates on arylamides are exceedingly low.. The enzyme catalyses Release of an N-terminal amino acid, preferentially leucine, but not glutamic or aspartic acids.. Functionally, presumably involved in the processing and regular turnover of intracellular proteins. Catalyzes the removal of unsubstituted N-terminal amino acids from various peptides. This chain is Probable cytosol aminopeptidase, found in Prochlorococcus marinus (strain MIT 9211).